The sequence spans 249 residues: Derlin-2.1 (249 aa).

Over 1 to 21 the chain is Cytoplasmic; it reads MAQAVEEWYRQMPIITRSYLT. Residues 22–42 form a helical membrane-spanning segment; sequence AAVVTTVGCTLEIISPYHLYL. At 43–96 the chain is on the lumenal side; sequence NPKLVVQHYEIWRLVTNFLYFRKMDLDFLFHMFFLARYCKLLEENSFRGRTADF. The helical transmembrane segment at 97-117 threads the bilayer; sequence FYMLLFGATVLTSIVLIGGMI. Residues 118–122 are Cytoplasmic-facing; it reads PYISE. Residues 123–143 traverse the membrane as a helical segment; the sequence is TFARILFLSNSLTFMMVYVWS. Residues 144-152 are Lumenal-facing; sequence KHNPFIHMS. Residues 153–173 form a helical membrane-spanning segment; the sequence is FLGLFTFTAAYLPWVLLGFSI. Residues 174–249 are Cytoplasmic-facing; it reads LVGSSTWVDL…GAMGLDPQAQ (76 aa).

Belongs to the derlin family. As to expression, expressed in roots, stalks, leaves, embryo and endosperm.

The protein resides in the endoplasmic reticulum membrane. Its function is as follows. May be involved in the degradation process of specific misfolded endoplasmic reticulum (ER) luminal proteins. The protein is Derlin-2.1 (DER2.1) of Zea mays (Maize).